Consider the following 330-residue polypeptide: NADH-quinone oxidoreductase subunit H (330 aa).

The next 8 helical transmembrane spans lie at 3-23, 76-96, 118-138, 161-181, 188-208, 244-264, 272-292, and 307-327; these read AAFVIATIIKILIVLGLFSAL, PVFMIAPVITAATAFIAMAAI, VGLLFVLGVMAAGLYGPLLAG, EVVTGLSVLAPVMIVGSISLV, AGGMGNWLIWKQPLAFVLFLI, FFIGEYANMFTIGFLVSLIFL, FIPGAIAILIKVFFFFFLFLW, and WLCWKVLMPLAVINVVITGIV.

The protein belongs to the complex I subunit 1 family. As to quaternary structure, NDH-1 is composed of 14 different subunits. Subunits NuoA, H, J, K, L, M, N constitute the membrane sector of the complex.

Its subcellular location is the cell inner membrane. It carries out the reaction a quinone + NADH + 5 H(+)(in) = a quinol + NAD(+) + 4 H(+)(out). NDH-1 shuttles electrons from NADH, via FMN and iron-sulfur (Fe-S) centers, to quinones in the respiratory chain. The immediate electron acceptor for the enzyme in this species is believed to be ubiquinone. Couples the redox reaction to proton translocation (for every two electrons transferred, four hydrogen ions are translocated across the cytoplasmic membrane), and thus conserves the redox energy in a proton gradient. This subunit may bind ubiquinone. This is NADH-quinone oxidoreductase subunit H from Nitratiruptor sp. (strain SB155-2).